The chain runs to 556 residues: Membrane protein insertase YidC (556 aa).

The next 5 membrane-spanning stretches (helical) occupy residues 6–26 (IVLYMALALIGLSLWNAWQID), 332–352 (LDLTVDYGILWFLSSLLFSLM), 358–378 (VVGNWGWSIVLVTVLIKLAFY), 428–448 (LGGCLPILIQIPVFIALYWVL), and 501–521 (VMMFLPILFTGLFWNFPSGLV).

This sequence belongs to the OXA1/ALB3/YidC family. Type 1 subfamily. Interacts with the Sec translocase complex via SecD. Specifically interacts with transmembrane segments of nascent integral membrane proteins during membrane integration.

The protein localises to the cell inner membrane. Functionally, required for the insertion and/or proper folding and/or complex formation of integral membrane proteins into the membrane. Involved in integration of membrane proteins that insert both dependently and independently of the Sec translocase complex, as well as at least some lipoproteins. Aids folding of multispanning membrane proteins. The protein is Membrane protein insertase YidC of Legionella pneumophila (strain Corby).